The sequence spans 259 residues: (3R)-3-hydroxyacyl-CoA dehydrogenase (259 aa).

Residues 13–21 (LVTGAGSGI) and 40–41 (DL) each bind NAD(+). At serine 58 the chain carries Phosphoserine. 72 to 74 (ADV) contributes to the NAD(+) binding site. Serine 154 contributes to the substrate binding site. N6-succinyllysine is present on lysine 158. Residue tyrosine 167 is the Proton acceptor of the active site. Residues 167 to 171 (YAASK) and 200 to 202 (ITT) each bind NAD(+). The residue at position 171 (lysine 171) is an N6-succinyllysine.

The protein belongs to the short-chain dehydrogenases/reductases (SDR) family. Heterotetramer with CBR4; contains two molecules of HSD17B8 and CBR4.

It is found in the mitochondrion matrix. The enzyme catalyses a (3R)-3-hydroxyacyl-CoA + NAD(+) = a 3-oxoacyl-CoA + NADH + H(+). It catalyses the reaction 17beta-estradiol + NAD(+) = estrone + NADH + H(+). It carries out the reaction testosterone + NAD(+) = androst-4-ene-3,17-dione + NADH + H(+). The catalysed reaction is 17beta-hydroxy-5alpha-androstan-3-one + NAD(+) = 5alpha-androstan-3,17-dione + NADH + H(+). Its pathway is steroid biosynthesis; estrogen biosynthesis. The protein operates within lipid metabolism; fatty acid biosynthesis. It functions in the pathway lipid metabolism; mitochondrial fatty acid beta-oxidation. Functionally, required for the solubility and assembly of the heterotetramer 3-ketoacyl-[acyl carrier protein] (ACP) reductase functional complex (KAR or KAR1) that forms part of the mitochondrial fatty acid synthase (mtFAS). Alpha-subunit of the KAR complex that acts as scaffold protein required for the stability of carbonyl reductase type-4 (CBR4, beta-subunit of the KAR complex) and for its 3-ketoacyl-ACP reductase activity, thereby participating in mitochondrial fatty acid biosynthesis. Catalyzes the NAD-dependent conversion of (3R)-3-hydroxyacyl-CoA into 3-ketoacyl-CoA (3-oxoacyl-CoA) with no chain length preference; this enzymatic activity is not needed for the KAR function. Prefers (3R)-3-hydroxyacyl-CoA over (3S)-3-hydroxyacyl-CoA and displays enzymatic activity only in the presence of NAD(+). Cooperates with enoyl-CoA hydratase 1 in mitochondria, together they constitute an alternative route to the auxiliary enzyme pathways for the breakdown of Z-PUFA (cis polyunsaturated fatty acid) enoyl-esters. NAD-dependent 17-beta-hydroxysteroid dehydrogenase with highest activity towards estradiol (17beta-estradiol or E2). Has very low activity towards testosterone and dihydrotestosterone (17beta-hydroxy-5alpha-androstan-3-one). Primarily an oxidative enzyme, it can switch to a reductive mode determined in the appropriate physiologic milieu and catalyze the reduction of estrone (E1) to form biologically active 17beta-estradiol. The chain is (3R)-3-hydroxyacyl-CoA dehydrogenase (HSD17B8) from Canis lupus familiaris (Dog).